Reading from the N-terminus, the 195-residue chain is Exosome complex component CSL4 (195 aa).

Phosphoserine occurs at positions 21 and 98. Positions 66–147 (DVGAIVTCKV…AQSNYLLTTA (82 aa)) constitute an S1 motif domain.

It belongs to the CSL4 family. Component of the RNA exosome core complex (Exo-9), composed of EXOSC1, EXOSC2, EXOSC3, EXOSC4, EXOSC5, EXOSC6, EXOSC7, EXOSC8 and EXOSC9; within the complex interacts with EXOSC6. The catalytically inactive RNA exosome core complex (Exo-9) associates with the catalytic subunit EXOSC10/RRP6. Exo-9 may associate with DIS3 to form the nucleolar exosome complex, or DIS3L to form the cytoplasmic exosome complex. Exo-9 is formed by a hexameric base ring consisting of the heterodimers EXOSC4-EXOSC9, EXOSC5-EXOSC8 and EXOSC6-EXOSC7, and a cap ring consisting of EXOSC1, EXOSC2 and EXOSC3. The RNA exosome complex associates with cofactors C1D/RRP47, MPHOSPH6/MPP6 and MTREX/MTR4. Interacts with DDX60.

It is found in the nucleus. Its subcellular location is the nucleolus. The protein resides in the cytoplasm. Functionally, non-catalytic component of the RNA exosome complex which has 3'-&gt;5' exoribonuclease activity and participates in a multitude of cellular RNA processing and degradation events. In the nucleus, the RNA exosome complex is involved in proper maturation of stable RNA species such as rRNA, snRNA and snoRNA, in the elimination of RNA processing by-products and non-coding 'pervasive' transcripts, such as antisense RNA species and promoter-upstream transcripts (PROMPTs), and of mRNAs with processing defects, thereby limiting or excluding their export to the cytoplasm. The RNA exosome may be involved in Ig class switch recombination (CSR) and/or Ig variable region somatic hypermutation (SHM) by targeting AICDA deamination activity to transcribed dsDNA substrates. In the cytoplasm, the RNA exosome complex is involved in general mRNA turnover and specifically degrades inherently unstable mRNAs containing AU-rich elements (AREs) within their 3' untranslated regions, and in RNA surveillance pathways, preventing translation of aberrant mRNAs. It seems to be involved in degradation of histone mRNA. The catalytic inactive RNA exosome core complex of 9 subunits (Exo-9) is proposed to play a pivotal role in the binding and presentation of RNA for ribonucleolysis, and to serve as a scaffold for the association with catalytic subunits and accessory proteins or complexes. EXOSC1 as peripheral part of the Exo-9 complex stabilizes the hexameric ring of RNase PH-domain subunits through contacts with EXOSC6 and EXOSC8. The chain is Exosome complex component CSL4 (EXOSC1) from Homo sapiens (Human).